A 333-amino-acid polypeptide reads, in one-letter code: Biotin synthase (333 aa).

The region spanning 47 to 276 (YYGKKVKLNM…TKEIRISGGR (230 aa)) is the Radical SAM core domain. The [4Fe-4S] cluster site is built by Cys-65, Cys-69, and Cys-72. [2Fe-2S] cluster-binding residues include Cys-109, Cys-141, Cys-201, and Arg-271.

The protein belongs to the radical SAM superfamily. Biotin synthase family. Homodimer. Requires [4Fe-4S] cluster as cofactor. The cofactor is [2Fe-2S] cluster.

The catalysed reaction is (4R,5S)-dethiobiotin + (sulfur carrier)-SH + 2 reduced [2Fe-2S]-[ferredoxin] + 2 S-adenosyl-L-methionine = (sulfur carrier)-H + biotin + 2 5'-deoxyadenosine + 2 L-methionine + 2 oxidized [2Fe-2S]-[ferredoxin]. It functions in the pathway cofactor biosynthesis; biotin biosynthesis; biotin from 7,8-diaminononanoate: step 2/2. In terms of biological role, catalyzes the conversion of dethiobiotin (DTB) to biotin by the insertion of a sulfur atom into dethiobiotin via a radical-based mechanism. In Bacillus licheniformis (strain ATCC 14580 / DSM 13 / JCM 2505 / CCUG 7422 / NBRC 12200 / NCIMB 9375 / NCTC 10341 / NRRL NRS-1264 / Gibson 46), this protein is Biotin synthase.